We begin with the raw amino-acid sequence, 491 residues long: Aspartyl/glutamyl-tRNA(Asn/Gln) amidotransferase subunit B (491 aa).

It belongs to the GatB/GatE family. GatB subfamily. Heterotrimer of A, B and C subunits.

The catalysed reaction is L-glutamyl-tRNA(Gln) + L-glutamine + ATP + H2O = L-glutaminyl-tRNA(Gln) + L-glutamate + ADP + phosphate + H(+). The enzyme catalyses L-aspartyl-tRNA(Asn) + L-glutamine + ATP + H2O = L-asparaginyl-tRNA(Asn) + L-glutamate + ADP + phosphate + 2 H(+). Its function is as follows. Allows the formation of correctly charged Asn-tRNA(Asn) or Gln-tRNA(Gln) through the transamidation of misacylated Asp-tRNA(Asn) or Glu-tRNA(Gln) in organisms which lack either or both of asparaginyl-tRNA or glutaminyl-tRNA synthetases. The reaction takes place in the presence of glutamine and ATP through an activated phospho-Asp-tRNA(Asn) or phospho-Glu-tRNA(Gln). The protein is Aspartyl/glutamyl-tRNA(Asn/Gln) amidotransferase subunit B of Burkholderia multivorans (strain ATCC 17616 / 249).